The following is a 249-amino-acid chain: MKKTGYFLLAVVIVAAVAGIGYWKLAANPNALRDIVLQQCVPNQLQQQNPAPCAEVKPDAGYVVFKDRNGPLQYLLMPTYRINGTESPLLVEPYTPNFFWLAWQARSFMSQKYGKDIPDSAISLAINSRSGRTQNHFHIHISCLRPDVRAQLDDNLAKVSTRWLPLPGGLRGNEYLARRVTESELAQRSPFMMLAEEVPDAREHMGSYALAVVRQSDDSFVLLATQRNLLAFNLASAEEIQDHQCEILQ.

The helical transmembrane segment at 7–27 threads the bilayer; that stretch reads FLLAVVIVAAVAGIGYWKLAA.

This sequence belongs to the Cdh family.

It is found in the cell inner membrane. It catalyses the reaction a CDP-1,2-diacyl-sn-glycerol + H2O = a 1,2-diacyl-sn-glycero-3-phosphate + CMP + 2 H(+). Its pathway is phospholipid metabolism; CDP-diacylglycerol degradation; phosphatidate from CDP-diacylglycerol: step 1/1. The chain is CDP-diacylglycerol pyrophosphatase from Citrobacter koseri (strain ATCC BAA-895 / CDC 4225-83 / SGSC4696).